Here is a 197-residue protein sequence, read N- to C-terminus: Ycf20-like protein (197 aa).

The next 3 helical transmembrane spans lie at 113-133 (MKIFLLLLGFYTANALATILG), 138-158 (WDVLVAGIVVAAIEGIGMLMY), and 173-193 (FVVFMNFWKAGVCLGLFVDAF).

Belongs to the ycf20 family.

The protein resides in the membrane. The sequence is that of Ycf20-like protein from Arabidopsis thaliana (Mouse-ear cress).